Here is a 185-residue protein sequence, read N- to C-terminus: MLSAEEAPYQSCYCEENVYKLLEKLKPNLDDFFAVLISNDIKMIPLWKQKAERDPDVLWDYHVITISKNSDGSAKVYDFDSWIDWGVDFQTYWNQTMNEDEMKQFREKYRRKFRIIPARIYLSLLSSDRSHMLNPDGTYMKPPPEWPLIQNSTNSNLMNLIDMKLEFPETMVMDETEIRRFFSDA.

Residues cysteine 14, histidine 62, and aspartate 78 contribute to the active site.

The protein belongs to the NTAQ1 family. Monomer.

The enzyme catalyses N-terminal L-glutaminyl-[protein] + H2O = N-terminal L-glutamyl-[protein] + NH4(+). Functionally, mediates the side-chain deamidation of N-terminal glutamine residues to glutamate, an important step in N-end rule pathway of protein degradation. Conversion of the resulting N-terminal glutamine to glutamate renders the protein susceptible to arginylation, polyubiquitination and degradation as specified by the N-end rule. Does not act on substrates with internal or C-terminal glutamine and does not act on non-glutamine residues in any position. The polypeptide is Protein N-terminal glutamine amidohydrolase (Caenorhabditis briggsae).